The following is a 140-amino-acid chain: Required for drug-induced death protein 1 (140 aa).

The tract at residues methionine 1–lysine 95 is disordered. Acidic residues predominate over residues glutamate 29–glutamate 53. Residues leucine 118 to arginine 140 traverse the membrane as a helical segment.

It localises to the membrane. Functionally, regulates drug efflux through modulation of ABCB1 localization and activity. The chain is Required for drug-induced death protein 1 from Rattus norvegicus (Rat).